The primary structure comprises 445 residues: Na(+)-translocating NADH-quinone reductase subunit A (445 aa).

Belongs to the NqrA family. In terms of assembly, composed of six subunits; NqrA, NqrB, NqrC, NqrD, NqrE and NqrF.

The catalysed reaction is a ubiquinone + n Na(+)(in) + NADH + H(+) = a ubiquinol + n Na(+)(out) + NAD(+). NQR complex catalyzes the reduction of ubiquinone-1 to ubiquinol by two successive reactions, coupled with the transport of Na(+) ions from the cytoplasm to the periplasm. NqrA to NqrE are probably involved in the second step, the conversion of ubisemiquinone to ubiquinol. This Marinomonas sp. (strain MWYL1) protein is Na(+)-translocating NADH-quinone reductase subunit A.